Consider the following 195-residue polypeptide: Ribonuclease HII (195 aa).

An RNase H type-2 domain is found at 6–195 (SLIAGVDEVG…KSFISRLKKN (190 aa)). Positions 12, 13, and 108 each coordinate a divalent metal cation.

This sequence belongs to the RNase HII family. Mn(2+) serves as cofactor. It depends on Mg(2+) as a cofactor.

The protein resides in the cytoplasm. The enzyme catalyses Endonucleolytic cleavage to 5'-phosphomonoester.. Endonuclease that specifically degrades the RNA of RNA-DNA hybrids. The polypeptide is Ribonuclease HII (Prochlorococcus marinus (strain NATL2A)).